The primary structure comprises 88 residues: Acyl-CoA-binding domain-containing protein 7 (88 aa).

Residues 3–88 (LQADFDQAAQ…ARELIEKYGI (86 aa)) form the ACB domain. An acyl-CoA contacts are provided by residues Arg15, 30-34 (YGLYK), Lys56, and Tyr75.

This sequence belongs to the ACBD7 family.

In terms of biological role, binds medium- and long-chain acyl-CoA esters. This Mus musculus (Mouse) protein is Acyl-CoA-binding domain-containing protein 7 (Acbd7).